Here is a 175-residue protein sequence, read N- to C-terminus: MTRYDDLPYRTCVGMMLLNAEGLVFIGRRLGGIEHVDETHVWQMPQGGVDPGEDPWTAAKRELYEETSVRSVEKLGEIADWLIYDIPRTVAGRSWKGRYRGQRQKWYAVRFTGDDSEIDVVSPGGGHKAEFISWRWEPMQNLPDLIVPFKRPVYERVVKEFAALAKDAAKVSGGG.

The Nudix hydrolase domain occupies 8–159 (PYRTCVGMML…KRPVYERVVK (152 aa)). A Nudix box motif is present at residues 47 to 68 (GGVDPGEDPWTAAKRELYEETS).

This sequence belongs to the Nudix hydrolase family. RppH subfamily. It depends on a divalent metal cation as a cofactor.

Its function is as follows. Accelerates the degradation of transcripts by removing pyrophosphate from the 5'-end of triphosphorylated RNA, leading to a more labile monophosphorylated state that can stimulate subsequent ribonuclease cleavage. The protein is RNA pyrophosphohydrolase of Rhodopseudomonas palustris (strain BisB18).